The sequence spans 695 residues: Probable glutamine--tRNA ligase (695 aa).

The short motif at Pro201–His211 is the 'HIGH' region element. ATP contacts are provided by residues Glu202–Asn204 and His208–Ala214. L-glutamine contacts are provided by Asp234 and Tyr391. Residues Thr410, Arg439–Leu440, and Leu447–Lys449 contribute to the ATP site. The 'KMSKS' region motif lies at Val446–Arg450.

It belongs to the class-I aminoacyl-tRNA synthetase family.

It carries out the reaction tRNA(Gln) + L-glutamine + ATP = L-glutaminyl-tRNA(Gln) + AMP + diphosphate. The polypeptide is Probable glutamine--tRNA ligase (Vairimorpha ceranae (strain BRL01) (Microsporidian parasite)).